The chain runs to 195 residues: Inner membrane-spanning protein YciB (195 aa).

5 helical membrane passes run 34–54 (IYGA…ALWL), 65–85 (FTLG…EDTF), 88–108 (WKAP…HFIG), 131–151 (LNIA…YVVF), and 160–180 (FKVF…GLFL).

Belongs to the YciB family.

Its subcellular location is the cell inner membrane. Functionally, plays a role in cell envelope biogenesis, maintenance of cell envelope integrity and membrane homeostasis. In Pseudomonas aeruginosa (strain LESB58), this protein is Inner membrane-spanning protein YciB.